The chain runs to 383 residues: Glucose-1-phosphate adenylyltransferase (383 aa).

Alpha-D-glucose 1-phosphate is bound by residues Tyr99, Gly164, 179–180 (EK), and Ser190.

It belongs to the bacterial/plant glucose-1-phosphate adenylyltransferase family. As to quaternary structure, homotetramer.

The enzyme catalyses alpha-D-glucose 1-phosphate + ATP + H(+) = ADP-alpha-D-glucose + diphosphate. It functions in the pathway glycan biosynthesis; glycogen biosynthesis. In terms of biological role, involved in the biosynthesis of ADP-glucose, a building block required for the elongation reactions to produce glycogen. Catalyzes the reaction between ATP and alpha-D-glucose 1-phosphate (G1P) to produce pyrophosphate and ADP-Glc. This Halalkalibacterium halodurans (strain ATCC BAA-125 / DSM 18197 / FERM 7344 / JCM 9153 / C-125) (Bacillus halodurans) protein is Glucose-1-phosphate adenylyltransferase.